Consider the following 462-residue polypeptide: GTPase Der (462 aa).

EngA-type G domains lie at 3–166 (PVIA…TTET) and 175–348 (IKIA…HSAI). GTP-binding positions include 9 to 16 (GRPNVGKS), 56 to 60 (DTGGI), 118 to 121 (NKTD), 181 to 188 (GRPNVGKS), 228 to 232 (DTAGV), and 293 to 296 (NKWD). The KH-like domain maps to 349–433 (QSFSTPKLTR…PLKIEFKGGQ (85 aa)).

The protein belongs to the TRAFAC class TrmE-Era-EngA-EngB-Septin-like GTPase superfamily. EngA (Der) GTPase family. Associates with the 50S ribosomal subunit.

Its function is as follows. GTPase that plays an essential role in the late steps of ribosome biogenesis. The sequence is that of GTPase Der from Legionella pneumophila (strain Paris).